The sequence spans 221 residues: Large ribosomal subunit protein uL16x (221 aa).

It belongs to the universal ribosomal protein uL16 family. Component of the small ribosomal subunit. Mature ribosomes consist of a small (40S) and a large (60S) subunit. The 40S subunit contains about 33 different proteins and 1 molecule of RNA (18S). The 60S subunit contains about 49 different proteins and 3 molecules of RNA (25S, 5.8S and 5S).

The polypeptide is Large ribosomal subunit protein uL16x (RPL10C) (Arabidopsis thaliana (Mouse-ear cress)).